The sequence spans 450 residues: Gastrin/cholecystokinin type B receptor (450 aa).

Residues 1–57 are Extracellular-facing; it reads MELLKLNSSVQGPGPGSGSSLCHPGVSLLNSSSAGNLSCEPPRIRGTGTRELELAIR. N-linked (GlcNAc...) asparagine glycans are attached at residues Asn7, Asn30, and Asn36. A helical membrane pass occupies residues 58–79; sequence ITLYAVIFLMSIGGNMLIIVVL. Residues 80 to 87 are Cytoplasmic-facing; it reads GLSRRLRT. Residues 88-109 traverse the membrane as a helical segment; it reads VTNAFLLSLAVSDLLLAVACMP. Residues 110 to 131 lie on the Extracellular side of the membrane; the sequence is FTLLPNLMGTFIFGTVICKAVS. Residues Cys127 and Cys205 are joined by a disulfide bond. A helical transmembrane segment spans residues 132–150; the sequence is YLMGVSVSVSTLNLVAIAL. Residues 151 to 170 are Cytoplasmic-facing; that stretch reads ERYSAICRPLQARVWQTRSH. A helical membrane pass occupies residues 171–189; that stretch reads AARVILATWLLSGLLMVPY. Over 190–219 the chain is Extracellular; that stretch reads PVYTVVQPVGPRVLQCMHRWPSARVRQTWS. A helical membrane pass occupies residues 220–242; it reads VLLLMLLFFIPGVVMAVAYGLIS. The Cytoplasmic segment spans residues 243-336; sequence RELYLGLRFD…KLLAKKRVVR (94 aa). The interval 258 to 277 is disordered; that stretch reads DTQSRVRNQGGLPGGTAPGP. The chain crosses the membrane as a helical span at residues 337–358; that stretch reads MLLVIVLLFFLCWLPIYSANTW. The Extracellular segment spans residues 359-376; it reads CAFDGPGAHRALSGAPIS. Residues 377–397 traverse the membrane as a helical segment; the sequence is FIHLLSYASACVNPLVYCFMH. The Cytoplasmic segment spans residues 398–450; sequence RRFRQACLDTCARCCPRPPRARPRPLPDEDPPTPSIASLSRLSYTTISTLGPG. Residue Cys411 is the site of S-palmitoyl cysteine attachment.

It belongs to the G-protein coupled receptor 1 family. As to expression, stomach and brain.

The protein resides in the cell membrane. Its function is as follows. Receptor for gastrin and cholecystokinin. The CCK-B receptors occur throughout the central nervous system where they modulate anxiety, analgesia, arousal, and neuroleptic activity. This receptor mediates its action by association with G proteins that activate a phosphatidylinositol-calcium second messenger system. This chain is Gastrin/cholecystokinin type B receptor (CCKBR), found in Mastomys natalensis (African soft-furred rat).